The primary structure comprises 334 residues: Holliday junction branch migration complex subunit RuvB (334 aa).

Positions 4–186 (ADRLIAPENP…FGITQRLEYY (183 aa)) are large ATPase domain (RuvB-L). ATP is bound by residues isoleucine 25, arginine 26, glycine 67, lysine 70, threonine 71, threonine 72, 133–135 (EDY), arginine 176, tyrosine 186, and arginine 223. Threonine 71 contributes to the Mg(2+) binding site. The tract at residues 187–257 (KIPDLQNIVQ…TADKALNMLD (71 aa)) is small ATPAse domain (RuvB-S). The tract at residues 260-334 (SKGFDYMDRK…RAYLHFGIEK (75 aa)) is head domain (RuvB-H). Positions 315 and 320 each coordinate DNA.

Belongs to the RuvB family. Homohexamer. Forms an RuvA(8)-RuvB(12)-Holliday junction (HJ) complex. HJ DNA is sandwiched between 2 RuvA tetramers; dsDNA enters through RuvA and exits via RuvB. An RuvB hexamer assembles on each DNA strand where it exits the tetramer. Each RuvB hexamer is contacted by two RuvA subunits (via domain III) on 2 adjacent RuvB subunits; this complex drives branch migration. In the full resolvosome a probable DNA-RuvA(4)-RuvB(12)-RuvC(2) complex forms which resolves the HJ.

It is found in the cytoplasm. It catalyses the reaction ATP + H2O = ADP + phosphate + H(+). Functionally, the RuvA-RuvB-RuvC complex processes Holliday junction (HJ) DNA during genetic recombination and DNA repair, while the RuvA-RuvB complex plays an important role in the rescue of blocked DNA replication forks via replication fork reversal (RFR). RuvA specifically binds to HJ cruciform DNA, conferring on it an open structure. The RuvB hexamer acts as an ATP-dependent pump, pulling dsDNA into and through the RuvAB complex. RuvB forms 2 homohexamers on either side of HJ DNA bound by 1 or 2 RuvA tetramers; 4 subunits per hexamer contact DNA at a time. Coordinated motions by a converter formed by DNA-disengaged RuvB subunits stimulates ATP hydrolysis and nucleotide exchange. Immobilization of the converter enables RuvB to convert the ATP-contained energy into a lever motion, pulling 2 nucleotides of DNA out of the RuvA tetramer per ATP hydrolyzed, thus driving DNA branch migration. The RuvB motors rotate together with the DNA substrate, which together with the progressing nucleotide cycle form the mechanistic basis for DNA recombination by continuous HJ branch migration. Branch migration allows RuvC to scan DNA until it finds its consensus sequence, where it cleaves and resolves cruciform DNA. The polypeptide is Holliday junction branch migration complex subunit RuvB (Vibrio vulnificus (strain YJ016)).